A 354-amino-acid polypeptide reads, in one-letter code: NADH-quinone oxidoreductase subunit H (354 aa).

Helical transmembrane passes span 25 to 45 (LVRI…LILW), 91 to 111 (WLYL…WAVI), 126 to 146 (LLYA…AGWA), 170 to 190 (MGFA…SEIV), 205 to 225 (FLSW…ISGI), 253 to 273 (MAFA…SALA), 290 to 310 (FIPG…VFIW), and 330 to 350 (VFLP…MSPL).

The protein belongs to the complex I subunit 1 family. As to quaternary structure, NDH-1 is composed of 14 different subunits. Subunits NuoA, H, J, K, L, M, N constitute the membrane sector of the complex.

It is found in the cell inner membrane. The catalysed reaction is a quinone + NADH + 5 H(+)(in) = a quinol + NAD(+) + 4 H(+)(out). Its function is as follows. NDH-1 shuttles electrons from NADH, via FMN and iron-sulfur (Fe-S) centers, to quinones in the respiratory chain. The immediate electron acceptor for the enzyme in this species is believed to be ubiquinone. Couples the redox reaction to proton translocation (for every two electrons transferred, four hydrogen ions are translocated across the cytoplasmic membrane), and thus conserves the redox energy in a proton gradient. This subunit may bind ubiquinone. The sequence is that of NADH-quinone oxidoreductase subunit H from Burkholderia thailandensis (strain ATCC 700388 / DSM 13276 / CCUG 48851 / CIP 106301 / E264).